Reading from the N-terminus, the 141-residue chain is Putative RING-H2 finger protein ATL62 (141 aa).

Residues 14-32 (FFAILTVFYSIFRCCLAYC) form a helical membrane-spanning segment. The RING-type; degenerate zinc finger occupies 79–121 (CVVCLSKFIDEDKARVLPSCNHCFHFDFTDTWLHSDYTCPNCR).

This sequence belongs to the RING-type zinc finger family. ATL subfamily.

The protein resides in the membrane. It catalyses the reaction S-ubiquitinyl-[E2 ubiquitin-conjugating enzyme]-L-cysteine + [acceptor protein]-L-lysine = [E2 ubiquitin-conjugating enzyme]-L-cysteine + N(6)-ubiquitinyl-[acceptor protein]-L-lysine.. It participates in protein modification; protein ubiquitination. The sequence is that of Putative RING-H2 finger protein ATL62 (ATL62) from Arabidopsis thaliana (Mouse-ear cress).